The primary structure comprises 535 residues: UDP-glucuronosyltransferase 1A1 (535 aa).

The N-terminal stretch at 1 to 29 is a signal peptide; that stretch reads MSVVCRSSCSLLLLPCLLLCVLGPSASHA. N-linked (GlcNAc...) asparagine glycans are attached at residues Asn-89, Asn-297, and Asn-435. The helical transmembrane segment at 493-509 threads the bilayer; it reads VIGFLLAIVLTVVFIVY.

It belongs to the UDP-glycosyltransferase family. As to quaternary structure, homodimers. Homooligomer. Interacts with UGT1A3, UGT1A4, UGT1A6, UGT1A7, UGT1A8, UGT1A9 and UGT1A10 to form heterodimers.

It is found in the endoplasmic reticulum membrane. The catalysed reaction is glucuronate acceptor + UDP-alpha-D-glucuronate = acceptor beta-D-glucuronoside + UDP + H(+). The enzyme catalyses 17beta-estradiol + UDP-alpha-D-glucuronate = 17beta-estradiol 3-O-(beta-D-glucuronate) + UDP + H(+). It catalyses the reaction 2-hydroxyestrone + UDP-alpha-D-glucuronate = 2-hydroxyestrone 3-O-(beta-D-glucuronate) + UDP + H(+). It carries out the reaction 2-hydroxy-17beta-estradiol + UDP-alpha-D-glucuronate = 2-hydroxy-17beta-estradiol 3-O-(beta-D-glucuronate) + UDP + H(+). The catalysed reaction is 2-methoxy-17beta-estradiol + UDP-alpha-D-glucuronate = 2-methoxy-17beta-estradiol 3-O-(beta-D-glucuronate) + UDP + H(+). The enzyme catalyses 17alpha-estradiol + UDP-alpha-D-glucuronate = 17alpha-estradiol 3-O-(beta-D-glucuronate) + UDP + H(+). It catalyses the reaction 16beta,17beta-estriol + UDP-alpha-D-glucuronate = 16beta,17beta-estriol 16-O-(beta-D-glucuronate) + UDP + H(+). It carries out the reaction losartan + UDP-alpha-D-glucuronate = losartan-2-N-beta-D-glucuronide + UDP. The catalysed reaction is prunetin + UDP-alpha-D-glucuronate = prunetin-4'-O-beta-D-glucuronide + UDP. The enzyme catalyses SN-38 + UDP-alpha-D-glucuronate = SN-38 O-beta-D-glucuronide + UDP + H(+). It catalyses the reaction (4Z,15Z)-bilirubin IXalpha + UDP-alpha-D-glucuronate = (4Z,15Z)-bilirubin IXalpha C12-beta-D-glucuronoside + UDP. It carries out the reaction (4Z,15Z)-bilirubin IXalpha + UDP-alpha-D-glucuronate = (4Z,15Z)-bilirubin IXalpha C8-beta-D-glucuronoside + UDP. The catalysed reaction is (4Z,15Z)-bilirubin IXalpha C8-beta-D-glucuronoside + UDP-alpha-D-glucuronate = (4Z,15Z)-bilirubin IXalpha C8,C12-beta-D-bisglucuronoside + UDP. The enzyme catalyses (4Z,15Z)-bilirubin IXalpha C12-beta-D-glucuronoside + UDP-alpha-D-glucuronate = (4Z,15Z)-bilirubin IXalpha C8,C12-beta-D-bisglucuronoside + UDP. It catalyses the reaction 8-iso-prostaglandin F2alpha + UDP-alpha-D-glucuronate = 8-iso-prostaglandin F2alpha-glucuronide + UDP + H(+). It carries out the reaction (5Z,8Z,11Z,14Z)-eicosatetraenoate + UDP-alpha-D-glucuronate = O-[(5Z),(8Z),(11Z),(14Z)-eicosatetraenoyl]-beta-D-glucuronate + UDP. The catalysed reaction is 15-hydroxy-(5Z,8Z,11Z,13E)-eicosatetraenoate + UDP-alpha-D-glucuronate = 15-O-(beta-D-glucuronosyl)-(5Z,8Z,11Z,14Z)-eicosatetraenoate + UDP + H(+). The enzyme catalyses 20-hydroxy-(5Z,8Z,11Z,14Z)-eicosatetraenoate + UDP-alpha-D-glucuronate = 20-O-(beta-D-glucuronosyl)-(5Z,8Z,11Z,14Z)-eicosatetraenoate + UDP + H(+). It catalyses the reaction prostaglandin B1 + UDP-alpha-D-glucuronate = 15-O-(beta-D-glucuronosyl)-prostaglandin B1 + UDP + H(+). It carries out the reaction (E)-ferulate + UDP-alpha-D-glucuronate = (E)-4-O-(beta-D-glucuronosyl)-ferulate + UDP + H(+). The catalysed reaction is (E)-ferulate + UDP-alpha-D-glucuronate = (E)-ferulic acid beta-D-glucuronate ester + UDP. In terms of biological role, UDP-glucuronosyltransferase (UGT) that catalyzes phase II biotransformation reactions in which lipophilic substrates are conjugated with glucuronic acid to increase the metabolite's water solubility, thereby facilitating excretion into either the urine or bile. Essential for the elimination and detoxification of drugs, xenobiotics and endogenous compounds. Catalyzes the glucuronidation of endogenous estrogen hormones such as estradiol, estrone and estriol. Involved in the glucuronidation of bilirubin, a degradation product occurring in the normal catabolic pathway that breaks down heme in vertebrates. Involved in the glucuronidation of arachidonic acid (AA) and AA-derived eicosanoids including 15-HETE, 20-HETE, PGB1 and F2-isoprostane (8-iso-PGF2alpha). Involved in the glucuronidation of the phytochemical ferulic acid at the phenolic or the carboxylic acid group. Also catalyzes the glucuronidation the isoflavones genistein, daidzein, glycitein, formononetin, biochanin A and prunetin, which are phytoestrogens with anticancer and cardiovascular properties. Involved in the glucuronidation of the AGTR1 angiotensin receptor antagonist losartan, a drug which can inhibit the effect of angiotensin II. Involved in the biotransformation of 7-ethyl-10-hydroxycamptothecin (SN-38), the pharmacologically active metabolite of the anticancer drug irinotecan. In Rattus norvegicus (Rat), this protein is UDP-glucuronosyltransferase 1A1.